The chain runs to 220 residues: 7-cyano-7-deazaguanine synthase (220 aa).

11–21 (VSGGMDSVTLM) provides a ligand contact to ATP. Zn(2+) is bound by residues Cys-186, Cys-194, Cys-197, and Cys-200.

It belongs to the QueC family. Requires Zn(2+) as cofactor.

The catalysed reaction is 7-carboxy-7-deazaguanine + NH4(+) + ATP = 7-cyano-7-deazaguanine + ADP + phosphate + H2O + H(+). It functions in the pathway purine metabolism; 7-cyano-7-deazaguanine biosynthesis. Functionally, catalyzes the ATP-dependent conversion of 7-carboxy-7-deazaguanine (CDG) to 7-cyano-7-deazaguanine (preQ(0)). This Porphyromonas gingivalis (strain ATCC BAA-308 / W83) protein is 7-cyano-7-deazaguanine synthase.